Here is a 213-residue protein sequence, read N- to C-terminus: Uridine kinase (213 aa).

Gly-15–Ser-22 is an ATP binding site.

It belongs to the uridine kinase family.

It is found in the cytoplasm. It catalyses the reaction uridine + ATP = UMP + ADP + H(+). The catalysed reaction is cytidine + ATP = CMP + ADP + H(+). The protein operates within pyrimidine metabolism; CTP biosynthesis via salvage pathway; CTP from cytidine: step 1/3. It functions in the pathway pyrimidine metabolism; UMP biosynthesis via salvage pathway; UMP from uridine: step 1/1. This Salmonella agona (strain SL483) protein is Uridine kinase.